The sequence spans 259 residues: MVPIAAIRRKLMDGSISHNELDELKKDQRKGVQELLKRYQAQQEKQQTLIQMHKQMWRYEQELKQRGYVAVCGVDEVGRGPLAGPVTACACILPDDFQLLGLTDSKKLSKAKREEYAKMISEQAVAYSIASVSAAEIDEINILQATKKAMTKAINGLSQKTDHLLLDAVRLDVPIAQTSLIKGDAKSLSIAASSVLAKVWRDRYMEELAQTYPGYGFDTHAGYGTASHLQALRTYGMTPEHRKSFRPVLEESQGLIYGT.

The RNase H type-2 domain occupies 69 to 257 (VAVCGVDEVG…VLEESQGLIY (189 aa)). A divalent metal cation contacts are provided by Asp-75, Glu-76, and Asp-167.

It belongs to the RNase HII family. Requires Mn(2+) as cofactor. The cofactor is Mg(2+).

It localises to the cytoplasm. It catalyses the reaction Endonucleolytic cleavage to 5'-phosphomonoester.. Endonuclease that specifically degrades the RNA of RNA-DNA hybrids. The chain is Ribonuclease HII from Shouchella clausii (strain KSM-K16) (Alkalihalobacillus clausii).